Reading from the N-terminus, the 249-residue chain is Superoxide dismutase 1 copper chaperone (249 aa).

The 64-residue stretch at 6–69 (TYEATYAIPM…TLRNCGKDAI (64 aa)) folds into the HMA domain. His-16 lines the Zn(2+) pocket. Cys-17 and Cys-20 together coordinate Cu cation. An intrachain disulfide couples Cys-27 to Cys-64. Positions 229 and 231 each coordinate Cu cation.

This sequence belongs to the CCS1 family. As to quaternary structure, homodimer, and heterodimer with apo-SOD1. Zinc-binding at His-16 of CCS1 and 'Glu-43' of apo-SOD1 is required for this heterodimerization. Requires Cu(2+) as cofactor.

It localises to the cytoplasm. Its subcellular location is the mitochondrion intermembrane space. Copper chaperone for apo superoxide dismutase 1 (SOD1). Binds copper ions and delivers them specifically to apo-SOD1. The polypeptide is Superoxide dismutase 1 copper chaperone (CCS1) (Saccharomyces cerevisiae (strain ATCC 204508 / S288c) (Baker's yeast)).